Reading from the N-terminus, the 263-residue chain is Aquaporin Lacbi1:247946 (263 aa).

Residues Met-1 to Glu-18 are Cytoplasmic-facing. The helical transmembrane segment at Phe-19–Ser-39 threads the bilayer. Residues Thr-40–Phe-45 are Extracellular-facing. A helical transmembrane segment spans residues Leu-46–Ile-66. Over Ser-67–Glu-89 the chain is Cytoplasmic. The short motif at Asn-72–Ala-74 is the NPA 1 element. The chain crosses the membrane as a helical span at residues Val-90–Ala-110. The Extracellular segment spans residues Asn-111–Gln-143. A helical transmembrane segment spans residues Ala-144–Leu-164. Topologically, residues Asn-165–Asn-169 are cytoplasmic. The chain crosses the membrane as a helical span at residues Gly-170–Ala-190. Residues Ser-191–Gln-227 lie on the Extracellular side of the membrane. An NPA 2 motif is present at residues Asn-201–Ala-203. A helical transmembrane segment spans residues Tyr-228 to Tyr-248. Residues Asp-249–Arg-263 lie on the Cytoplasmic side of the membrane.

This sequence belongs to the MIP/aquaporin (TC 1.A.8) family.

The protein resides in the membrane. The catalysed reaction is H2O(in) = H2O(out). Water channel required to facilitate the transport of water across membranes. Shows low but significant water conductivity, but no glycerol nor ammonium transport activities. This Laccaria bicolor (strain S238N-H82 / ATCC MYA-4686) (Bicoloured deceiver) protein is Aquaporin Lacbi1:247946.